The sequence spans 543 residues: Probable malate:quinone oxidoreductase (543 aa).

This sequence belongs to the MQO family. The cofactor is FAD.

The enzyme catalyses (S)-malate + a quinone = a quinol + oxaloacetate. Its pathway is carbohydrate metabolism; tricarboxylic acid cycle; oxaloacetate from (S)-malate (quinone route): step 1/1. The chain is Probable malate:quinone oxidoreductase from Acinetobacter baylyi (strain ATCC 33305 / BD413 / ADP1).